A 72-amino-acid polypeptide reads, in one-letter code: Subtilisin-chymotrypsin inhibitor-2B (72 aa).

This sequence belongs to the protease inhibitor I13 (potato type I serine protease inhibitor) family.

Its function is as follows. Inhibits both subtilisin and chymotrypsin. The protein is Subtilisin-chymotrypsin inhibitor-2B of Hordeum vulgare (Barley).